A 236-amino-acid chain; its full sequence is Ribonuclease 3 (236 aa).

Residues 7 to 136 (KSYILKKFNI…FIGALYLDQG (130 aa)) enclose the RNase III domain. Glu-49 contributes to the Mg(2+) binding site. Residue Asp-53 is part of the active site. Residues Asp-122 and Glu-125 each coordinate Mg(2+). Residue Glu-125 is part of the active site. The DRBM domain maps to 162–232 (DFKSRLQERL…ARAALKILED (71 aa)).

It belongs to the ribonuclease III family. In terms of assembly, homodimer. Mg(2+) is required as a cofactor.

The protein resides in the cytoplasm. The enzyme catalyses Endonucleolytic cleavage to 5'-phosphomonoester.. Its function is as follows. Digests double-stranded RNA. Involved in the processing of primary rRNA transcript to yield the immediate precursors to the large and small rRNAs (23S and 16S). Processes some mRNAs, and tRNAs when they are encoded in the rRNA operon. Processes pre-crRNA and tracrRNA of type II CRISPR loci if present in the organism. The protein is Ribonuclease 3 of Leuconostoc mesenteroides subsp. mesenteroides (strain ATCC 8293 / DSM 20343 / BCRC 11652 / CCM 1803 / JCM 6124 / NCDO 523 / NBRC 100496 / NCIMB 8023 / NCTC 12954 / NRRL B-1118 / 37Y).